The chain runs to 285 residues: NAD kinase (285 aa).

Asp-66 (proton acceptor) is an active-site residue. Residues 66 to 67 (DG), 137 to 138 (ND), Arg-148, Arg-165, Asp-167, and 178 to 183 (TAYSLS) contribute to the NAD(+) site.

This sequence belongs to the NAD kinase family. A divalent metal cation is required as a cofactor.

The protein localises to the cytoplasm. It catalyses the reaction NAD(+) + ATP = ADP + NADP(+) + H(+). Its function is as follows. Involved in the regulation of the intracellular balance of NAD and NADP, and is a key enzyme in the biosynthesis of NADP. Catalyzes specifically the phosphorylation on 2'-hydroxyl of the adenosine moiety of NAD to yield NADP. The protein is NAD kinase of Prosthecochloris aestuarii (strain DSM 271 / SK 413).